Here is a 399-residue protein sequence, read N- to C-terminus: uncharacterized protein (399 aa).

Transmembrane regions (helical) follow at residues 6–26 (HLTFTINLLVSLFFLTILIIP), 27–47 (KGYNYAPIILSAIGLIYFIPL), 60–80 (LIFSFLFYFFTFLLSIIINKD), 111–131 (ILYAIPSSALITGCVALFQKF), 147–167 (MGNIAISLATFSIVITLHFFI), 173–193 (STLFGFVAIILAIMTSALSGA), 195–215 (GGWIGLPVVVGIILFLYKEFI), 220–240 (IITLIAIITIGLTALITSPKF), 328–348 (GLVGFIALILIILTPIFYFIK), and 362–382 (ILGIIHIVSHIFYFTSQSFLA).

It is found in the cell membrane. This is an uncharacterized protein from Haemophilus influenzae (strain ATCC 51907 / DSM 11121 / KW20 / Rd).